The following is a 338-amino-acid chain: MLTLGLESSCDETSCSLVQNGKILANKIASQDIHASYGGVIPELASRAHLQTFPELLTAATQSAGVSLEDIELISVANTPGLIGALSIGVNFAKGLASGLKRPLIGVNHVEAHLYAACMEAPATQFPALGLAISGAHTSLFLMPDATTFLLIGKTRDDAIGETFDKVARFLGLPYPGGQKLEELAREGDADAFAFSPARVSGYDFSFSGLKTAVLYALKGNNSSAKAPFPEVSETQKRNIAASFQKAVFMTIAQKLPDIVKAFSCESLIVGGGVANNSYFRRLLNQICSLPIYFPSSQLCSDNAAMIAGLGERLFCNRTHVSKEVIPCARYQWESACS.

Fe cation is bound by residues His-109 and His-113. Substrate is bound by residues 132 to 136, Asp-165, Gly-178, and Asn-277; that span reads AISGA. Asp-302 lines the Fe cation pocket.

Belongs to the KAE1 / TsaD family. Requires Fe(2+) as cofactor.

The protein localises to the cytoplasm. It catalyses the reaction L-threonylcarbamoyladenylate + adenosine(37) in tRNA = N(6)-L-threonylcarbamoyladenosine(37) in tRNA + AMP + H(+). Its function is as follows. Required for the formation of a threonylcarbamoyl group on adenosine at position 37 (t(6)A37) in tRNAs that read codons beginning with adenine. Is involved in the transfer of the threonylcarbamoyl moiety of threonylcarbamoyl-AMP (TC-AMP) to the N6 group of A37, together with TsaE and TsaB. TsaD likely plays a direct catalytic role in this reaction. The sequence is that of tRNA N6-adenosine threonylcarbamoyltransferase from Chlamydia trachomatis serovar L2b (strain UCH-1/proctitis).